Consider the following 490-residue polypeptide: GTPase Der (490 aa).

2 consecutive EngA-type G domains span residues 3–166 and 203–376; these read PVVA…MDDV and IKLA…DSST. Residues 9-16, 56-60, 118-121, 209-216, 256-260, and 321-324 contribute to the GTP site; these read GRPNVGKS, DTGGI, NKTD, DTAGV, and NKWD. The region spanning 377–461 is the KH-like domain; the sequence is RRVSTAMLTR…PIRIQFKEGE (85 aa).

Belongs to the TRAFAC class TrmE-Era-EngA-EngB-Septin-like GTPase superfamily. EngA (Der) GTPase family. In terms of assembly, associates with the 50S ribosomal subunit.

Its function is as follows. GTPase that plays an essential role in the late steps of ribosome biogenesis. This chain is GTPase Der, found in Salmonella gallinarum (strain 287/91 / NCTC 13346).